Consider the following 518-residue polypeptide: Protein nucleotidyltransferase YdiU (518 aa).

8 residues coordinate ATP: G100, G102, R103, K123, D135, G136, R193, and R200. The active-site Proton acceptor is the D270. Mg(2+) contacts are provided by N271 and D280. Residue D280 participates in ATP binding.

It belongs to the SELO family. Mg(2+) is required as a cofactor. Mn(2+) serves as cofactor.

The enzyme catalyses L-seryl-[protein] + ATP = 3-O-(5'-adenylyl)-L-seryl-[protein] + diphosphate. It carries out the reaction L-threonyl-[protein] + ATP = 3-O-(5'-adenylyl)-L-threonyl-[protein] + diphosphate. The catalysed reaction is L-tyrosyl-[protein] + ATP = O-(5'-adenylyl)-L-tyrosyl-[protein] + diphosphate. It catalyses the reaction L-histidyl-[protein] + UTP = N(tele)-(5'-uridylyl)-L-histidyl-[protein] + diphosphate. The enzyme catalyses L-seryl-[protein] + UTP = O-(5'-uridylyl)-L-seryl-[protein] + diphosphate. It carries out the reaction L-tyrosyl-[protein] + UTP = O-(5'-uridylyl)-L-tyrosyl-[protein] + diphosphate. Nucleotidyltransferase involved in the post-translational modification of proteins. It can catalyze the addition of adenosine monophosphate (AMP) or uridine monophosphate (UMP) to a protein, resulting in modifications known as AMPylation and UMPylation. This is Protein nucleotidyltransferase YdiU from Xanthomonas oryzae pv. oryzae (strain PXO99A).